Reading from the N-terminus, the 489-residue chain is Phenylalanine--tRNA ligase alpha subunit (489 aa).

Residues T316, Q355–D357, F395, and F420 contribute to the L-phenylalanine site.

Belongs to the class-II aminoacyl-tRNA synthetase family. Phe-tRNA synthetase alpha subunit type 2 subfamily. In terms of assembly, tetramer of two alpha and two beta subunits. Requires Mg(2+) as cofactor.

It is found in the cytoplasm. The enzyme catalyses tRNA(Phe) + L-phenylalanine + ATP = L-phenylalanyl-tRNA(Phe) + AMP + diphosphate + H(+). The chain is Phenylalanine--tRNA ligase alpha subunit from Pyrobaculum aerophilum (strain ATCC 51768 / DSM 7523 / JCM 9630 / CIP 104966 / NBRC 100827 / IM2).